The following is a 611-amino-acid chain: ANK repeat-containing protein nipk-1 (611 aa).

Residues 91–149 (NSKSKKKTENQETKEKDEEAEEKKDGPPKDDKELKMKKEKEQEDENAELDEQKKDGDLL) are a coiled coil. Disordered stretches follow at residues 92–167 (SKSK…SHPY), 212–255 (ISAS…DTSR), and 280–333 (TKEE…LSPR). A compositionally biased stretch (basic and acidic residues) spans 97–131 (KTENQETKEKDEEAEEKKDGPPKDDKELKMKKEKE). 3 stretches are compositionally biased toward polar residues: residues 212 to 223 (ISASTTPDTVLS), 239 to 255 (ESLQ…DTSR), and 315 to 333 (GTCS…LSPR). ANK repeat units lie at residues 375-405 (DGDT…TMNE), 417-446 (FGET…SPNS), 452-482 (VGDS…RVNE), 486-527 (DGQT…DPTI), and 532-561 (TGKT…EDTF).

It belongs to the iASPP family. Expressed in the nervous system.

Its function is as follows. Acts downstream of the receptor complex composed of ilcr-1 and ilcr-2, which is a signaling complex that modulates neuronal activity and animal behavior in response to sensory neuron input. Mediates signaling of the complex. The polypeptide is ANK repeat-containing protein nipk-1 (Caenorhabditis elegans).